The chain runs to 105 residues: MVKQIESKYAFQEALNSAGEKLVVVDFSATWCGPCKMIKPFFHSLSEKYSNVVFLEVDVDDCQDVAAECEVKCMPTFQFFKKGQKVSEFSGANKEKLEATINELI.

A Thioredoxin domain is found at 2–105 (VKQIESKYAF…KLEATINELI (104 aa)). At lysine 3 the chain carries N6-acetyllysine. Lysine 8 carries the post-translational modification N6-succinyllysine. Catalysis depends on nucleophile residues cysteine 32 and cysteine 35. A disulfide bridge links cysteine 32 with cysteine 35. Residue lysine 39 is modified to N6-acetyllysine. An S-nitrosocysteine mark is found at cysteine 62 and cysteine 69. At cysteine 73 the chain carries S-nitrosocysteine; alternate. Lysine 94 is modified (N6-acetyllysine; alternate). Lysine 94 carries the post-translational modification N6-succinyllysine; alternate.

The protein belongs to the thioredoxin family. As to quaternary structure, homodimer; disulfide-linked. Interacts with TXNIP through the redox-active site. Interacts with MAP3K5 and CASP3. Interacts with APEX1; the interaction stimulates the FOS/JUN AP-1 DNA-binding activity in a redox-dependent manner. In terms of processing, in the fully reduced protein, both Cys-69 and Cys-73 are nitrosylated in response to nitric oxide (NO). When two disulfide bonds are present in the protein, only Cys-73 is nitrosylated. Cys-73 can serve as donor for nitrosylation of target proteins.

Its subcellular location is the nucleus. The protein localises to the cytoplasm. It localises to the secreted. Its function is as follows. Participates in various redox reactions through the reversible oxidation of its active center dithiol to a disulfide and catalyzes dithiol-disulfide exchange reactions. Plays a role in the reversible S-nitrosylation of cysteine residues in target proteins, and thereby contributes to the response to intracellular nitric oxide. Nitrosylates the active site Cys of CASP3 in response to nitric oxide (NO), and thereby inhibits caspase-3 activity. Induces the FOS/JUN AP-1 DNA binding activity in ionizing radiation (IR) cells through its oxidation/reduction status and stimulates AP-1 transcriptional activity. The polypeptide is Thioredoxin (TXN) (Ovis aries (Sheep)).